Here is a 180-residue protein sequence, read N- to C-terminus: SAGA-associated factor 11 homolog (180 aa).

Residues 98–119 (CSCPNCNRIVAASRFAPHLEKC) form an SGF11-type zinc finger. Residues 138–180 (RDGGNYFGADEDDEDDADWSGEKRKKKIAPVRTNGSKKNGKTS) are disordered. Residues 146–156 (ADEDDEDDADW) show a composition bias toward acidic residues.

This sequence belongs to the SGF11 family. Component of some SAGA transcription coactivator-HAT complexes. Within the SAGA complex, participates in a subcomplex of SAGA called the DUB module (deubiquitination module).

The protein resides in the nucleus. Component of the transcription regulatory histone acetylation (HAT) complex SAGA, a multiprotein complex that activates transcription by remodeling chromatin and mediating histone acetylation and deubiquitination. Within the SAGA complex, participates in a subcomplex that specifically deubiquitinates histone H2B. The SAGA complex is recruited to specific gene promoters by activators, where it is required for transcription. The chain is SAGA-associated factor 11 homolog from Aedes aegypti (Yellowfever mosquito).